Reading from the N-terminus, the 461-residue chain is Bacterial E1-like protein BilD (461 aa).

C385 acts as the Glycyl thioester intermediate in catalysis.

In terms of biological role, component of the Bil (bacterial ISG15-like) antiviral defense system, composed of BilA, BilB, BilC and BilD. The Bil system specifically conjugates a ubiquitin-like moiety (bilA) to the bacteriophage central tail fiber (CTF, or tip attachment protein J) via reactions involving E1 (bilD) and E2 (bilB). Modifies CTF of phage SECphi27 and SECphi4, which probably interferes with assembly of the phage tail. Also modifies T5 baseplate hub protein pb3 (gene D16), but not gp27 of phage T6 (Bil defends against T6). BilD (E1) catalyzes the first step in conjugation. Activates ubiquitin-like BilA by first adenylating its C-terminal glycine residue with ATP, and then conjugates it to the side chain of a cysteine residue in E1 (this protein), yielding a ubiquitin-E1 thioester and free AMP. Bil-encoding bacteria produce mostly defective phage SECphi27, many of which have phage assembly defects, including no tails. SECphi27 phage progeny produced in E.coli with the Bil system inject less DNA into naive host cells, maybe because the phage are less able to adsorb and inject their DNA into host cells. Expression of the Bil system in E.coli (strain MG1655) confers about 100-fold resistance to phage SECphi27, SECphi18, SECphi6, SECphi4 and T5, but not to SECphi17. When cells expressing the Bil system are infected by phage SECphi27 at low multiplicity of infection (0.03 MOI) the culture survives, at 3.0 MOI the culture collapses at the same time as cells without the Bil system. The protein is Bacterial E1-like protein BilD of Collimonas sp. (strain OK412).